The chain runs to 374 residues: Glutamate 5-kinase (374 aa).

Lys13 contacts ATP. Substrate is bound by residues Ser54, Asp141, and Asn153. Residue 173–174 participates in ATP binding; the sequence is SD. In terms of domain architecture, PUA spans 278 to 355; sequence KGTVHLDSGA…NEIESVLGYP (78 aa).

The protein belongs to the glutamate 5-kinase family.

It is found in the cytoplasm. It carries out the reaction L-glutamate + ATP = L-glutamyl 5-phosphate + ADP. Its pathway is amino-acid biosynthesis; L-proline biosynthesis; L-glutamate 5-semialdehyde from L-glutamate: step 1/2. In terms of biological role, catalyzes the transfer of a phosphate group to glutamate to form L-glutamate 5-phosphate. In Roseobacter denitrificans (strain ATCC 33942 / OCh 114) (Erythrobacter sp. (strain OCh 114)), this protein is Glutamate 5-kinase.